The following is a 522-amino-acid chain: Putative zinc finger protein 286B (522 aa).

The tract at residues 1 to 30 is disordered; it reads METDLAEMPEKGVLSSQDSPHFQEKSTEEG. 10 consecutive C2H2-type zinc fingers follow at residues 244–266, 272–294, 299–321, 327–349, 355–377, 383–405, 411–433, 439–461, 467–489, and 495–517; these read HKCN…QRVH, YTCN…QRTH, FECR…QRIH, YECN…QLIH, YECN…QRTH, YKCQ…QRVH, YECS…QRIH, YKCS…QRTH, and FRCN…QRVH.

It belongs to the krueppel C2H2-type zinc-finger protein family.

It localises to the nucleus. In terms of biological role, may be involved in transcriptional regulation. The polypeptide is Putative zinc finger protein 286B (ZNF286B) (Homo sapiens (Human)).